The following is a 163-amino-acid chain: Deoxyuridine 5'-triphosphate nucleotidohydrolase (163 aa).

It belongs to the dUTPase family. Mg(2+) is required as a cofactor.

The catalysed reaction is dUTP + H2O = dUMP + diphosphate + H(+). Its pathway is pyrimidine metabolism; dUMP biosynthesis; dUMP from dCTP (dUTP route): step 2/2. This enzyme is involved in nucleotide metabolism: it produces dUMP, the immediate precursor of thymidine nucleotides and it decreases the intracellular concentration of dUTP so that uracil cannot be incorporated into DNA. This Galliformes (FAdV-8) protein is Deoxyuridine 5'-triphosphate nucleotidohydrolase.